The following is a 715-amino-acid chain: Formate dehydrogenase H (715 aa).

One can recognise a 4Fe-4S Mo/W bis-MGD-type domain in the interval 1 to 56 (MKKVVTVCPYCASGCKINLVVDNGKIVRAEAAQGKTNQGTLCLKGYYGWDFINDTQ). [4Fe-4S] cluster is bound by residues C8, C11, C15, and C42. The active-site Electron donor/acceptor is the K44. The Mo-bis(molybdopterin guanine dinucleotide) site is built by R110, U140, N176, D179, S180, C201, D202, R204, G221, N223, M297, Q335, D404, T408, Q428, D429, S445, D478, R581, E582, H585, S587, Y678, and K679. Catalysis depends on U140, which acts as the Proton donor/acceptor. Residue U140 is a non-standard amino acid, selenocysteine.

Belongs to the prokaryotic molybdopterin-containing oxidoreductase family. As to quaternary structure, consists of two separable enzymatic activities: a formate dehydrogenase component (FDH-H) and hydrogenase-3. [4Fe-4S] cluster is required as a cofactor. The cofactor is Mo-bis(molybdopterin guanine dinucleotide).

It carries out the reaction formate + A + H(+) = AH2 + CO2. With respect to regulation, inhibited by aerobic conditions. Decomposes formic acid to hydrogen and carbon dioxide under anaerobic conditions in the absence of exogenous electron acceptors. This is Formate dehydrogenase H (fdhF) from Escherichia coli (strain K12).